Reading from the N-terminus, the 464-residue chain is Glutamate--tRNA ligase (464 aa).

A 'HIGH' region motif is present at residues 9–19; it reads PSPTGYLHIGG. The short motif at 242–246 is the 'KMSKS' region element; sequence KISKR. Residue K245 participates in ATP binding.

It belongs to the class-I aminoacyl-tRNA synthetase family. Glutamate--tRNA ligase type 1 subfamily. As to quaternary structure, monomer.

It localises to the cytoplasm. It carries out the reaction tRNA(Glu) + L-glutamate + ATP = L-glutamyl-tRNA(Glu) + AMP + diphosphate. Functionally, catalyzes the attachment of glutamate to tRNA(Glu) in a two-step reaction: glutamate is first activated by ATP to form Glu-AMP and then transferred to the acceptor end of tRNA(Glu). This is Glutamate--tRNA ligase from Neisseria gonorrhoeae (strain NCCP11945).